The primary structure comprises 425 residues: Serine--tRNA ligase (425 aa).

233–235 (TAE) is a binding site for L-serine. Residue 264–266 (RRE) participates in ATP binding. Glu287 contributes to the L-serine binding site. 351-354 (EVSS) is a binding site for ATP. Residue Ser386 participates in L-serine binding.

It belongs to the class-II aminoacyl-tRNA synthetase family. Type-1 seryl-tRNA synthetase subfamily. In terms of assembly, homodimer. The tRNA molecule binds across the dimer.

It is found in the cytoplasm. It catalyses the reaction tRNA(Ser) + L-serine + ATP = L-seryl-tRNA(Ser) + AMP + diphosphate + H(+). It carries out the reaction tRNA(Sec) + L-serine + ATP = L-seryl-tRNA(Sec) + AMP + diphosphate + H(+). It functions in the pathway aminoacyl-tRNA biosynthesis; selenocysteinyl-tRNA(Sec) biosynthesis; L-seryl-tRNA(Sec) from L-serine and tRNA(Sec): step 1/1. Its function is as follows. Catalyzes the attachment of serine to tRNA(Ser). Is also able to aminoacylate tRNA(Sec) with serine, to form the misacylated tRNA L-seryl-tRNA(Sec), which will be further converted into selenocysteinyl-tRNA(Sec). The sequence is that of Serine--tRNA ligase from Thermosipho melanesiensis (strain DSM 12029 / CIP 104789 / BI429).